Here is a 148-residue protein sequence, read N- to C-terminus: UPF0756 membrane protein NGK_2061 (148 aa).

Helical transmembrane passes span 10–32, 50–70, 85–105, and 116–136; these read LVTL…ATIL, HGLN…LVSG, MISA…GVPL, and LLIG…GPLI.

The protein belongs to the UPF0756 family.

The protein localises to the cell membrane. This Neisseria gonorrhoeae (strain NCCP11945) protein is UPF0756 membrane protein NGK_2061.